We begin with the raw amino-acid sequence, 382 residues long: Alpha-methylacyl-CoA racemase (382 aa).

Residues Arg-36 and 55-58 (LDLK) contribute to the substrate site. An N6-acetyllysine modification is found at Lys-58. Lys-87 is subject to N6-acetyllysine; alternate. At Lys-87 the chain carries N6-succinyllysine; alternate. Position 121-126 (121-126 (GHDINY)) interacts with substrate. His-122 functions as the Proton acceptor in the catalytic mechanism. Catalysis depends on Asp-152, which acts as the Proton donor. N6-succinyllysine is present on Lys-268. A Microbody targeting signal motif is present at residues 380–382 (ASL).

This sequence belongs to the CoA-transferase III family. In terms of assembly, monomer.

Its subcellular location is the peroxisome. It is found in the mitochondrion. The catalysed reaction is a (2S)-2-methylacyl-CoA = a (2R)-2-methylacyl-CoA. The enzyme catalyses (25R)-3alpha,7alpha,12alpha-trihydroxy-5beta-cholestan-26-oyl-CoA = (25S)-3alpha,7alpha,12alpha-trihydroxy-5beta-cholestan-26-oyl-CoA. It catalyses the reaction (2R,6)-dimethylheptanoyl-CoA = (2S,6)-dimethylheptanoyl-CoA. It functions in the pathway lipid metabolism; bile acid biosynthesis. Its pathway is lipid metabolism; fatty acid metabolism. Functionally, catalyzes the interconversion of (R)- and (S)-stereoisomers of alpha-methyl-branched-chain fatty acyl-CoA esters. Acts only on coenzyme A thioesters, not on free fatty acids, and accepts as substrates a wide range of alpha-methylacyl-CoAs, including pristanoyl-CoA, trihydroxycoprostanoyl-CoA (an intermediate in bile acid synthesis), and arylpropionic acids like the anti-inflammatory drug ibuprofen (2-(4-isobutylphenyl)propionic acid) but neither 3-methyl-branched nor linear-chain acyl-CoAs. The protein is Alpha-methylacyl-CoA racemase (AMACR) of Homo sapiens (Human).